A 568-amino-acid polypeptide reads, in one-letter code: Urease subunit alpha (568 aa).

Residues 131–568 enclose the Urease domain; the sequence is GGIDTHIHFI…LPMAQRYFLF (438 aa). Ni(2+) is bound by residues His-136, His-138, and Lys-219. At Lys-219 the chain carries N6-carboxylysine. His-221 serves as a coordination point for substrate. Ni(2+)-binding residues include His-248 and His-274. Residue His-322 is the Proton donor of the active site. Residue Asp-362 coordinates Ni(2+).

The protein belongs to the metallo-dependent hydrolases superfamily. Urease alpha subunit family. Heterotrimer of UreA (gamma), UreB (beta) and UreC (alpha) subunits. Three heterotrimers associate to form the active enzyme. It depends on Ni cation as a cofactor. Carboxylation allows a single lysine to coordinate two nickel ions.

The protein resides in the cytoplasm. It carries out the reaction urea + 2 H2O + H(+) = hydrogencarbonate + 2 NH4(+). It participates in nitrogen metabolism; urea degradation; CO(2) and NH(3) from urea (urease route): step 1/1. The chain is Urease subunit alpha from Trichormus variabilis (strain ATCC 29413 / PCC 7937) (Anabaena variabilis).